The chain runs to 487 residues: GTPase Der (487 aa).

2 EngA-type G domains span residues 3 to 166 (PVIA…PRDA) and 193 to 366 (IKIA…KSAV). GTP contacts are provided by residues 9–16 (GRPNVGKS), 56–60 (DTGGI), 118–121 (NKID), 199–206 (GRPNVGKS), 246–250 (DTAGV), and 311–314 (NKWD). The 85-residue stretch at 367–451 (TRWPTSRLTQ…PIRIEYKGGE (85 aa)) folds into the KH-like domain. Basic and acidic residues predominate over residues 448–461 (KGGENPYEGKKNTL). Residues 448-487 (KGGENPYEGKKNTLTDRQVNKKRRLMSHHKKAEKKRRDKR) are disordered. The segment covering 467–487 (NKKRRLMSHHKKAEKKRRDKR) has biased composition (basic residues).

Belongs to the TRAFAC class TrmE-Era-EngA-EngB-Septin-like GTPase superfamily. EngA (Der) GTPase family. As to quaternary structure, associates with the 50S ribosomal subunit.

In terms of biological role, GTPase that plays an essential role in the late steps of ribosome biogenesis. The chain is GTPase Der from Pseudomonas putida (strain W619).